The following is a 29-amino-acid chain: Cytochrome b6-f complex subunit 8 (29 aa).

Residues 3–23 traverse the membrane as a helical segment; it reads IISLAWAALMVVFTFSLSLVV.

Belongs to the PetN family. In terms of assembly, the 4 large subunits of the cytochrome b6-f complex are cytochrome b6, subunit IV (17 kDa polypeptide, PetD), cytochrome f and the Rieske protein, while the 4 small subunits are PetG, PetL, PetM and PetN. The complex functions as a dimer.

It is found in the plastid. The protein resides in the chloroplast thylakoid membrane. Functionally, component of the cytochrome b6-f complex, which mediates electron transfer between photosystem II (PSII) and photosystem I (PSI), cyclic electron flow around PSI, and state transitions. The sequence is that of Cytochrome b6-f complex subunit 8 from Nicotiana tomentosiformis (Tobacco).